A 290-amino-acid polypeptide reads, in one-letter code: Glutamate racemase (290 aa).

Residues 24–25 (DS) and 56–57 (YG) contribute to the substrate site. Cysteine 87 acts as the Proton donor/acceptor in catalysis. 88 to 89 (NT) provides a ligand contact to substrate. Cysteine 199 serves as the catalytic Proton donor/acceptor. A substrate-binding site is contributed by 200-201 (TH). The tract at residues 271-290 (GADGASLPDPPSPRIELTTT) is disordered.

The protein belongs to the aspartate/glutamate racemases family.

It catalyses the reaction L-glutamate = D-glutamate. It participates in cell wall biogenesis; peptidoglycan biosynthesis. In terms of biological role, provides the (R)-glutamate required for cell wall biosynthesis. This chain is Glutamate racemase, found in Deinococcus radiodurans (strain ATCC 13939 / DSM 20539 / JCM 16871 / CCUG 27074 / LMG 4051 / NBRC 15346 / NCIMB 9279 / VKM B-1422 / R1).